The following is a 1613-amino-acid chain: Myosin-IIIa (1613 aa).

In terms of domain architecture, Protein kinase spans Trp21–Ile287. Residues Ile27–Val35 and Lys50 each bind ATP. Asp150 serves as the catalytic Proton acceptor. The Myosin motor domain maps to Lys338–Lys1052. The interval Leu933–Asn955 is actin-binding. 2 consecutive IQ domains span residues Ala1054–Ser1083 and Arg1081–Thr1110. 2 disordered regions span residues Val1136 to Phe1168 and Ser1476 to Thr1506. Residues Pro1145 to Ser1161 are compositionally biased toward low complexity. Residues Glu1398–Ser1476 are interaction with MORN4. Residues Arg1488–Lys1497 are compositionally biased toward basic residues.

This sequence in the C-terminal section; belongs to the TRAFAC class myosin-kinesin ATPase superfamily. Myosin family. It in the N-terminal section; belongs to the protein kinase superfamily. STE Ser/Thr protein kinase family. As to quaternary structure, interacts with MORN4. Interacts (via C-terminus) with ESPN and ESPNL. In terms of tissue distribution, expressed in the cochlear hair cells (at protein level). Expressed in utricle hair bundles (at protein level).

The protein localises to the cytoplasm. It is found in the cytoskeleton. Its subcellular location is the cell projection. The protein resides in the filopodium tip. It localises to the stereocilium. It catalyses the reaction L-seryl-[protein] + ATP = O-phospho-L-seryl-[protein] + ADP + H(+). The enzyme catalyses L-threonyl-[protein] + ATP = O-phospho-L-threonyl-[protein] + ADP + H(+). The catalysed reaction is ATP + H2O = ADP + phosphate + H(+). Actin-dependent motor protein with a protein kinase activity, playing an essential role in hearing. Probably plays also a role in vision. Required for normal cochlear hair bundle development and hearing. Plays an important role in the early steps of cochlear hair bundle morphogenesis. Influences the number and lengths of stereocilia to be produced and limits the growth of microvilli within the forming auditory hair bundles thereby contributing to the architecture of the hair bundle, including its staircase pattern. Involved in the elongation of actin in stereocilia tips by transporting the actin regulatory factor ESPN to the plus ends of actin filaments. This is Myosin-IIIa (Myo3a) from Mus musculus (Mouse).